A 447-amino-acid chain; its full sequence is Argininosuccinate synthase (447 aa).

ATP contacts are provided by residues 17 to 25 and Ala-43; that span reads AFSGGLDTS. Residue Tyr-99 participates in L-citrulline binding. Positions 129 and 131 each coordinate ATP. L-aspartate is bound by residues Thr-131, Asn-135, and Asp-136. Asn-135 provides a ligand contact to L-citrulline. Residue Asp-136 participates in ATP binding. L-citrulline contacts are provided by Arg-139 and Ser-192. Asp-194 provides a ligand contact to ATP. Residues Thr-201, Glu-203, and Glu-280 each contribute to the L-citrulline site.

Belongs to the argininosuccinate synthase family. Type 2 subfamily. As to quaternary structure, homotetramer.

It is found in the cytoplasm. The enzyme catalyses L-citrulline + L-aspartate + ATP = 2-(N(omega)-L-arginino)succinate + AMP + diphosphate + H(+). The protein operates within amino-acid biosynthesis; L-arginine biosynthesis; L-arginine from L-ornithine and carbamoyl phosphate: step 2/3. The protein is Argininosuccinate synthase of Klebsiella pneumoniae (strain 342).